The chain runs to 125 residues: MAISKEDVLEYISNLSVLELSELVKEFEEKFGVSAAPVMIAGGAAAGGAAAAAEEKTEFDIVLTDGGAKKIEVIKIVRALTGLGLKEAKDAVEQTPSTLKEGVAKAEAEEAKKQLEEAGAKVELK.

It belongs to the bacterial ribosomal protein bL12 family. In terms of assembly, homodimer. Part of the ribosomal stalk of the 50S ribosomal subunit. Forms a multimeric L10(L12)X complex, where L10 forms an elongated spine to which 2 to 4 L12 dimers bind in a sequential fashion. Binds GTP-bound translation factors.

Forms part of the ribosomal stalk which helps the ribosome interact with GTP-bound translation factors. Is thus essential for accurate translation. The chain is Large ribosomal subunit protein bL12 from Campylobacter jejuni (strain RM1221).